The primary structure comprises 349 residues: Probable arabinogalactan endo-beta-1,4-galactanase A (349 aa).

The signal sequence occupies residues 1 to 15; it reads MLLSFLPLLPLATAA. N-linked (GlcNAc...) asparagine glycosylation occurs at N126. E150 (proton donor) is an active-site residue. E261 acts as the Nucleophile in catalysis.

It belongs to the glycosyl hydrolase 53 family.

The protein resides in the secreted. The enzyme catalyses The enzyme specifically hydrolyzes (1-&gt;4)-beta-D-galactosidic linkages in type I arabinogalactans.. In terms of biological role, endogalactanase involved in the degradation of plant cell wall polysaccharides, and more particularly of hairy regions of pectin. In Aspergillus terreus (strain NIH 2624 / FGSC A1156), this protein is Probable arabinogalactan endo-beta-1,4-galactanase A (galA).